The sequence spans 257 residues: Short-chain dehydrogenase reductase 3a (257 aa).

12–36 (IITGGASGIGAEAVRLFTDHGAKVV) contributes to the NAD(+) binding site. Substrate is bound at residue S144. The active-site Proton acceptor is the Y157.

This sequence belongs to the short-chain dehydrogenases/reductases (SDR) family. As to expression, highly expressed in the radicle tip, lateral root primordia and tips, and the area surrounding the cotyledon hydathode of young seedlings.

Functionally, confers resistance to the incompatible pathogenic bacteria P.syringae pv. tomato DC3000 in a PR1-dependent manner. Seems not involved in abscisic acid (ABA) biosynthesis. This chain is Short-chain dehydrogenase reductase 3a (SDR3a), found in Arabidopsis thaliana (Mouse-ear cress).